The sequence spans 468 residues: MAKGSKGYIVGVMGPVVDVKFPEEELPDIFNALEVVNPQTGQKIVLEVEQLIGDGVVRTVAMDSTDGLMKGLEVVDTGEPITAPVGKEVLGRILNVIGEPVDEAGEIKSKERWPIHRPAPELIEQSTEIEILETGIKVIDLLAPFPKGGKIGFFGGAGVGKTVLVMELIRNIAIEHKGFSVFAGVGERTREGNELWLEMQESGVLGNTVLVFGQMNEPPGARFRVALTALTIAEYFRDVEGRDVLLFIDNIFRFVQAGSEVSALLGRMPSAVGYQPTLATDMGELQERITSTRRGSITSVQAIYVPADDITDPAPATTFAHLDATVVLSRRIAELGLYPAVDPLDSSSKILDPAVVGREHYEVARGVQEVLQRYKDLQDIIAILGVEELSPEDKLVVHRARRIQRFLSQPFHVAERFTGRPGKYVPLEETIRGFKEILDGKLDDVPEQAFLMAGTIDEVKERAKEMRS.

155–162 lines the ATP pocket; the sequence is GGAGVGKT.

The protein belongs to the ATPase alpha/beta chains family. As to quaternary structure, F-type ATPases have 2 components, CF(1) - the catalytic core - and CF(0) - the membrane proton channel. CF(1) has five subunits: alpha(3), beta(3), gamma(1), delta(1), epsilon(1). CF(0) has three main subunits: a(1), b(2) and c(9-12). The alpha and beta chains form an alternating ring which encloses part of the gamma chain. CF(1) is attached to CF(0) by a central stalk formed by the gamma and epsilon chains, while a peripheral stalk is formed by the delta and b chains.

The protein localises to the cell inner membrane. The enzyme catalyses ATP + H2O + 4 H(+)(in) = ADP + phosphate + 5 H(+)(out). In terms of biological role, produces ATP from ADP in the presence of a proton gradient across the membrane. The catalytic sites are hosted primarily by the beta subunits. The polypeptide is ATP synthase subunit beta (Thermotoga neapolitana (strain ATCC 49049 / DSM 4359 / NBRC 107923 / NS-E)).